Reading from the N-terminus, the 283-residue chain is Formamidopyrimidine-DNA glycosylase (283 aa).

Proline 2 acts as the Schiff-base intermediate with DNA in catalysis. The active-site Proton donor is glutamate 3. Lysine 60 functions as the Proton donor; for beta-elimination activity in the catalytic mechanism. Residues histidine 95, arginine 114, and arginine 159 each coordinate DNA. An FPG-type zinc finger spans residues 244-278 (WVYGRHNQPCRVCGTPIERIKLGGRSSHFCPQCQP). Arginine 268 serves as the catalytic Proton donor; for delta-elimination activity.

It belongs to the FPG family. In terms of assembly, monomer. Zn(2+) is required as a cofactor.

It catalyses the reaction Hydrolysis of DNA containing ring-opened 7-methylguanine residues, releasing 2,6-diamino-4-hydroxy-5-(N-methyl)formamidopyrimidine.. It carries out the reaction 2'-deoxyribonucleotide-(2'-deoxyribose 5'-phosphate)-2'-deoxyribonucleotide-DNA = a 3'-end 2'-deoxyribonucleotide-(2,3-dehydro-2,3-deoxyribose 5'-phosphate)-DNA + a 5'-end 5'-phospho-2'-deoxyribonucleoside-DNA + H(+). Functionally, involved in base excision repair of DNA damaged by oxidation or by mutagenic agents. Acts as a DNA glycosylase that recognizes and removes damaged bases. Has a preference for oxidized purines, such as 7,8-dihydro-8-oxoguanine (8-oxoG). Has AP (apurinic/apyrimidinic) lyase activity and introduces nicks in the DNA strand. Cleaves the DNA backbone by beta-delta elimination to generate a single-strand break at the site of the removed base with both 3'- and 5'-phosphates. This chain is Formamidopyrimidine-DNA glycosylase, found in Crocosphaera subtropica (strain ATCC 51142 / BH68) (Cyanothece sp. (strain ATCC 51142)).